The sequence spans 370 residues: Small ribosomal subunit biogenesis GTPase RsgA (370 aa).

The CP-type G domain occupies 97 to 255; it reads QTQLDRPPIA…LADTPGFNQP (159 aa). GTP contacts are provided by residues 146–149 and 197–205; these read NKSD and GPSGVGKSS. Zn(2+) contacts are provided by Cys280, Cys285, His287, and Cys293. Residues 328–370 are disordered; that stretch reads TLKLKTKGKGQSQYEPKLESKKYRRTSRRTQVQGLQDLYQEEE.

It belongs to the TRAFAC class YlqF/YawG GTPase family. RsgA subfamily. In terms of assembly, monomer. Associates with 30S ribosomal subunit, binds 16S rRNA. Requires Zn(2+) as cofactor.

It is found in the cytoplasm. One of several proteins that assist in the late maturation steps of the functional core of the 30S ribosomal subunit. Helps release RbfA from mature subunits. May play a role in the assembly of ribosomal proteins into the subunit. Circularly permuted GTPase that catalyzes slow GTP hydrolysis, GTPase activity is stimulated by the 30S ribosomal subunit. This is Small ribosomal subunit biogenesis GTPase RsgA from Trichormus variabilis (strain ATCC 29413 / PCC 7937) (Anabaena variabilis).